The sequence spans 975 residues: Translation initiation factor IF-2 (975 aa).

Residues 48 to 63 (DHLRKSHGATDGDKRK) show a composition bias toward basic and acidic residues. Disordered stretches follow at residues 48-84 (DHLR…GKAR) and 96-388 (FVKR…QAPT). Positions 104-115 (ETGADQAQAQTD) are enriched in low complexity. Over residues 120–177 (AELKRREEEARREAELLEKQAQELRERQERLEREEAERRAREEAAEAERRRAEEEAAA) the composition is skewed to basic and acidic residues. Over residues 178-211 (KRAAAAQAEAAQQAAAAREQAQRAQSEPAEQSAQ) the composition is skewed to low complexity. The segment covering 212–263 (DEARAAAERAAQREAAKKAEDAAREAADKARAEQEEIRKRREAAEAEARAIR) has biased composition (basic and acidic residues). The segment covering 302–330 (KPAGEAAAARPAAKKPASGAPAPAAAPAG) has biased composition (low complexity). The span at 359–372 (SSGGVDRGWRGGPK) shows a compositional bias: gly residues. The tr-type G domain maps to 475–644 (PRPPVVTVMG…LLQAEVLELK (170 aa)). The interval 484-491 (GHVDHGKT) is G1. 484 to 491 (GHVDHGKT) contributes to the GTP binding site. Positions 509–513 (GITQH) are G2. The segment at 530 to 533 (DTPG) is G3. GTP-binding positions include 530-534 (DTPGH) and 584-587 (NKID). Positions 584-587 (NKID) are G4. A G5 region spans residues 620 to 622 (SAK).

It belongs to the TRAFAC class translation factor GTPase superfamily. Classic translation factor GTPase family. IF-2 subfamily.

The protein localises to the cytoplasm. One of the essential components for the initiation of protein synthesis. Protects formylmethionyl-tRNA from spontaneous hydrolysis and promotes its binding to the 30S ribosomal subunits. Also involved in the hydrolysis of GTP during the formation of the 70S ribosomal complex. This chain is Translation initiation factor IF-2, found in Burkholderia pseudomallei (strain 1710b).